The primary structure comprises 473 residues: Aspartyl/glutamyl-tRNA(Asn/Gln) amidotransferase subunit B (473 aa).

It belongs to the GatB/GatE family. GatB subfamily. Heterotrimer of A, B and C subunits.

The catalysed reaction is L-glutamyl-tRNA(Gln) + L-glutamine + ATP + H2O = L-glutaminyl-tRNA(Gln) + L-glutamate + ADP + phosphate + H(+). The enzyme catalyses L-aspartyl-tRNA(Asn) + L-glutamine + ATP + H2O = L-asparaginyl-tRNA(Asn) + L-glutamate + ADP + phosphate + 2 H(+). Functionally, allows the formation of correctly charged Asn-tRNA(Asn) or Gln-tRNA(Gln) through the transamidation of misacylated Asp-tRNA(Asn) or Glu-tRNA(Gln) in organisms which lack either or both of asparaginyl-tRNA or glutaminyl-tRNA synthetases. The reaction takes place in the presence of glutamine and ATP through an activated phospho-Asp-tRNA(Asn) or phospho-Glu-tRNA(Gln). In Campylobacter hominis (strain ATCC BAA-381 / DSM 21671 / CCUG 45161 / LMG 19568 / NCTC 13146 / CH001A), this protein is Aspartyl/glutamyl-tRNA(Asn/Gln) amidotransferase subunit B.